The sequence spans 369 residues: Dihydroorotate dehydrogenase (quinone) (369 aa).

FMN is bound by residues 76–80 (AGLDK) and Thr-100. Lys-80 provides a ligand contact to substrate. 125 to 129 (NRMGF) serves as a coordination point for substrate. FMN contacts are provided by Asn-154 and Asn-187. Asn-187 serves as a coordination point for substrate. Ser-190 serves as the catalytic Nucleophile. Asn-192 lines the substrate pocket. FMN is bound by residues Lys-232 and Ser-260. 261–262 (NT) serves as a coordination point for substrate. FMN-binding positions include Gly-282, Gly-311, and 332 to 333 (YS).

The protein belongs to the dihydroorotate dehydrogenase family. Type 2 subfamily. In terms of assembly, monomer. It depends on FMN as a cofactor.

The protein resides in the cell membrane. It catalyses the reaction (S)-dihydroorotate + a quinone = orotate + a quinol. It functions in the pathway pyrimidine metabolism; UMP biosynthesis via de novo pathway; orotate from (S)-dihydroorotate (quinone route): step 1/1. In terms of biological role, catalyzes the conversion of dihydroorotate to orotate with quinone as electron acceptor. The protein is Dihydroorotate dehydrogenase (quinone) (pyrD) of Deinococcus radiodurans (strain ATCC 13939 / DSM 20539 / JCM 16871 / CCUG 27074 / LMG 4051 / NBRC 15346 / NCIMB 9279 / VKM B-1422 / R1).